Here is a 211-residue protein sequence, read N- to C-terminus: Small ribosomal subunit protein uS3 (211 aa).

Residues 16–85 enclose the KH type-2 domain; sequence IDEYFKTKLV…NPQIEVKQVE (70 aa).

This sequence belongs to the universal ribosomal protein uS3 family. Part of the 30S ribosomal subunit.

In terms of biological role, binds the lower part of the 30S subunit head. The protein is Small ribosomal subunit protein uS3 of Methanococcus maripaludis (strain DSM 14266 / JCM 13030 / NBRC 101832 / S2 / LL).